We begin with the raw amino-acid sequence, 112 residues long: UPF0060 membrane protein XOO1694 (112 aa).

4 consecutive transmembrane segments (helical) span residues 8-28 (LLLFAATALAELVGCYLPYLW), 32-52 (GGSVWLLLPTALRLASFVWLL), 62-82 (VYAAYGGVYIASALGLWLWWV), and 92-112 (LLGAVCCLFGMAIIMFAPRSA).

It belongs to the UPF0060 family.

It localises to the cell inner membrane. The sequence is that of UPF0060 membrane protein XOO1694 from Xanthomonas oryzae pv. oryzae (strain MAFF 311018).